We begin with the raw amino-acid sequence, 1056 residues long: 120.7 kDa protein in NOF-FB transposable element (1056 aa).

The tract at residues 716–749 (KTIKPTEGNDAEDNDTDDENKEMDLSEQPKEKPR) is disordered. Over residues 724 to 736 (NDAEDNDTDDENK) the composition is skewed to acidic residues. Residues 737–749 (EMDLSEQPKEKPR) are compositionally biased toward basic and acidic residues.

It localises to the nucleus. May be involved in the transposition of NOF-FB and other FB elements. In Drosophila melanogaster (Fruit fly), this protein is 120.7 kDa protein in NOF-FB transposable element (NOF).